A 177-amino-acid polypeptide reads, in one-letter code: ATP synthase subunit delta (177 aa).

The protein belongs to the ATPase delta chain family. In terms of assembly, F-type ATPases have 2 components, F(1) - the catalytic core - and F(0) - the membrane proton channel. F(1) has five subunits: alpha(3), beta(3), gamma(1), delta(1), epsilon(1). F(0) has three main subunits: a(1), b(2) and c(10-14). The alpha and beta chains form an alternating ring which encloses part of the gamma chain. F(1) is attached to F(0) by a central stalk formed by the gamma and epsilon chains, while a peripheral stalk is formed by the delta and b chains.

The protein localises to the cell inner membrane. Its function is as follows. F(1)F(0) ATP synthase produces ATP from ADP in the presence of a proton or sodium gradient. F-type ATPases consist of two structural domains, F(1) containing the extramembraneous catalytic core and F(0) containing the membrane proton channel, linked together by a central stalk and a peripheral stalk. During catalysis, ATP synthesis in the catalytic domain of F(1) is coupled via a rotary mechanism of the central stalk subunits to proton translocation. In terms of biological role, this protein is part of the stalk that links CF(0) to CF(1). It either transmits conformational changes from CF(0) to CF(1) or is implicated in proton conduction. This chain is ATP synthase subunit delta, found in Edwardsiella ictaluri (strain 93-146).